Here is a 393-residue protein sequence, read N- to C-terminus: Protein TsgA (393 aa).

A run of 12 helical transmembrane segments spans residues 11 to 31, 51 to 71, 78 to 98, 101 to 121, 134 to 154, 162 to 182, 206 to 226, 245 to 265, 273 to 293, 297 to 317, 332 to 352, and 361 to 381; these read WISF…GMVM, FLNA…EIVP, FGFL…SLAL, TAMF…TFLI, LLFT…IAAF, WYWV…LTFG, IGVL…LGFI, TLVS…SFIL, ILTV…TGTP, AWSI…IITL, FVLT…GPIV, and LLTA…LGFV.

Belongs to the major facilitator superfamily. TsgA family.

The protein resides in the cell inner membrane. This Shigella boydii serotype 4 (strain Sb227) protein is Protein TsgA.